A 308-amino-acid polypeptide reads, in one-letter code: Elongation factor Ts (308 aa).

Residues 80–83 form an involved in Mg(2+) ion dislocation from EF-Tu region; sequence TDFV.

Belongs to the EF-Ts family.

The protein localises to the cytoplasm. Functionally, associates with the EF-Tu.GDP complex and induces the exchange of GDP to GTP. It remains bound to the aminoacyl-tRNA.EF-Tu.GTP complex up to the GTP hydrolysis stage on the ribosome. This Methylobacterium radiotolerans (strain ATCC 27329 / DSM 1819 / JCM 2831 / NBRC 15690 / NCIMB 10815 / 0-1) protein is Elongation factor Ts.